Here is a 350-residue protein sequence, read N- to C-terminus: Nicotinate-nucleotide--dimethylbenzimidazole phosphoribosyltransferase (350 aa).

Glu-317 functions as the Proton acceptor in the catalytic mechanism.

The protein belongs to the CobT family.

The enzyme catalyses 5,6-dimethylbenzimidazole + nicotinate beta-D-ribonucleotide = alpha-ribazole 5'-phosphate + nicotinate + H(+). It functions in the pathway nucleoside biosynthesis; alpha-ribazole biosynthesis; alpha-ribazole from 5,6-dimethylbenzimidazole: step 1/2. Its function is as follows. Catalyzes the synthesis of alpha-ribazole-5'-phosphate from nicotinate mononucleotide (NAMN) and 5,6-dimethylbenzimidazole (DMB). In Shewanella sp. (strain MR-7), this protein is Nicotinate-nucleotide--dimethylbenzimidazole phosphoribosyltransferase.